The following is a 1149-amino-acid chain: FH2 domain-containing protein 1 (1149 aa).

Disordered regions lie at residues 18–79 (LATA…PPPG), 464–540 (NHDR…SRLS), 554–660 (ESAT…PLLP), and 681–1149 (SPKS…PLQK). Composition is skewed to pro residues over residues 33–48 (ASPP…PPCP) and 56–79 (PSPP…PPPG). Residues 88-483 (GYSSLGKKKR…QLQRQKEMEQ (396 aa)) form the FH2 domain. Positions 464–485 (NHDREEQERKQLQRQKEMEQKR) are enriched in basic and acidic residues. Polar residues predominate over residues 486–504 (YSWSTGELGSFGRSSSEND). Ser-501 bears the Phosphoserine mark. Low complexity predominate over residues 522 to 532 (PRPNSPSYRPP). 2 stretches are compositionally biased toward polar residues: residues 554-575 (ESAT…SSPR) and 591-604 (SHGP…QASK). 2 positions are modified to phosphoserine: Ser-645 and Ser-655. Positions 681 to 693 (SPKSLEEGSQLTL) are enriched in polar residues. Basic and acidic residues predominate over residues 784-795 (MDSRAGGDKQEE). Low complexity predominate over residues 801–822 (GSVSSGAGEAGSSQVSSNSVSS). Residues 844 to 856 (PKDRPSRGKDAIA) show a composition bias toward basic and acidic residues. The span at 926 to 947 (ETPSSTDTPLSRRSSVRGTSDT) shows a compositional bias: polar residues. Residues 960-1086 (EEPRLPRSSG…VKGGSEDSAS (127 aa)) are MTBD; microtubule-binding domain. Positions 965 to 974 (PRSSGSISGR) are enriched in low complexity. Composition is skewed to polar residues over residues 1042–1052 (ARNTVASSSRS) and 1064–1074 (TGLTRTVSQRQ). Residues 1123–1134 (GTTERSSLRLKD) are compositionally biased toward basic and acidic residues.

In terms of assembly, interacts with CEP170. In terms of tissue distribution, brain, heart and lung (at protein level).

The protein localises to the golgi apparatus. It is found in the cell projection. The protein resides in the cilium. Its function is as follows. Microtubule-associated formin which regulates both actin and microtubule dynamics. Induces microtubule acetylation and stabilization and actin stress fiber formation. Regulates Golgi ribbon formation. Required for normal cilia assembly. Early in cilia assembly, may assist in the maturation and positioning of the centrosome/basal body, and once cilia assembly has initiated, may also promote cilia elongation by inhibiting disassembly. This Mus musculus (Mouse) protein is FH2 domain-containing protein 1 (Fhdc1).